A 145-amino-acid polypeptide reads, in one-letter code: 3-dehydroquinate dehydratase (145 aa).

The Proton acceptor role is filled by Tyr-23. 3 residues coordinate substrate: Asn-75, His-81, and Asp-88. His-101 serves as the catalytic Proton donor. Residues 102–103 (IS) and Arg-112 each bind substrate.

It belongs to the type-II 3-dehydroquinase family. In terms of assembly, homododecamer.

It catalyses the reaction 3-dehydroquinate = 3-dehydroshikimate + H2O. Its pathway is metabolic intermediate biosynthesis; chorismate biosynthesis; chorismate from D-erythrose 4-phosphate and phosphoenolpyruvate: step 3/7. Functionally, catalyzes a trans-dehydration via an enolate intermediate. The chain is 3-dehydroquinate dehydratase from Caldicellulosiruptor bescii (strain ATCC BAA-1888 / DSM 6725 / KCTC 15123 / Z-1320) (Anaerocellum thermophilum).